We begin with the raw amino-acid sequence, 375 residues long: Queuine tRNA-ribosyltransferase (375 aa).

Aspartate 90 acts as the Proton acceptor in catalysis. Residues 90–94 (DSGGF), aspartate 144, glutamine 190, and glycine 217 contribute to the substrate site. Residues 248 to 254 (GIGTPHY) are RNA binding. Residue aspartate 267 is the Nucleophile of the active site. An RNA binding; important for wobble base 34 recognition region spans residues 272 to 276 (TRIAR). Zn(2+) contacts are provided by cysteine 305, cysteine 307, cysteine 310, and histidine 336.

This sequence belongs to the queuine tRNA-ribosyltransferase family. In terms of assembly, homodimer. Within each dimer, one monomer is responsible for RNA recognition and catalysis, while the other monomer binds to the replacement base PreQ1. Requires Zn(2+) as cofactor.

The enzyme catalyses 7-aminomethyl-7-carbaguanine + guanosine(34) in tRNA = 7-aminomethyl-7-carbaguanosine(34) in tRNA + guanine. The protein operates within tRNA modification; tRNA-queuosine biosynthesis. Catalyzes the base-exchange of a guanine (G) residue with the queuine precursor 7-aminomethyl-7-deazaguanine (PreQ1) at position 34 (anticodon wobble position) in tRNAs with GU(N) anticodons (tRNA-Asp, -Asn, -His and -Tyr). Catalysis occurs through a double-displacement mechanism. The nucleophile active site attacks the C1' of nucleotide 34 to detach the guanine base from the RNA, forming a covalent enzyme-RNA intermediate. The proton acceptor active site deprotonates the incoming PreQ1, allowing a nucleophilic attack on the C1' of the ribose to form the product. After dissociation, two additional enzymatic reactions on the tRNA convert PreQ1 to queuine (Q), resulting in the hypermodified nucleoside queuosine (7-(((4,5-cis-dihydroxy-2-cyclopenten-1-yl)amino)methyl)-7-deazaguanosine). In Borrelia duttonii (strain Ly), this protein is Queuine tRNA-ribosyltransferase.